The chain runs to 207 residues: 8-oxoguanine DNA glycosylase/AP lyase (207 aa).

Residues Lys-128 and Asp-146 contribute to the active site.

The protein belongs to the type-2 OGG1 family.

It catalyses the reaction 2'-deoxyribonucleotide-(2'-deoxyribose 5'-phosphate)-2'-deoxyribonucleotide-DNA = a 3'-end 2'-deoxyribonucleotide-(2,3-dehydro-2,3-deoxyribose 5'-phosphate)-DNA + a 5'-end 5'-phospho-2'-deoxyribonucleoside-DNA + H(+). In terms of biological role, catalyzes the excision of an oxidatively damaged form of guanine (7,8-dihydro-8-oxoguanine = 8-oxoG) from DNA. Also cleaves the DNA backbone at apurinic/apyrimidinic sites (AP sites). The sequence is that of 8-oxoguanine DNA glycosylase/AP lyase from Saccharolobus islandicus (strain Y.N.15.51 / Yellowstone #2) (Sulfolobus islandicus).